Consider the following 484-residue polypeptide: Sucrose-6-phosphate hydrolase (484 aa).

Residues 48–51 (LLND), Q67, 110–111 (YS), 168–169 (RD), and E223 contribute to the substrate site. D51 is an active-site residue.

The protein belongs to the glycosyl hydrolase 32 family.

It localises to the cytoplasm. The catalysed reaction is Hydrolysis of terminal non-reducing beta-D-fructofuranoside residues in beta-D-fructofuranosides.. Its pathway is glycan biosynthesis; sucrose metabolism. Its function is as follows. Enables the bacterium to metabolize sucrose as a sole carbon source. The chain is Sucrose-6-phosphate hydrolase (scrB) from Vibrio alginolyticus.